Here is a 196-residue protein sequence, read N- to C-terminus: Chloroplastic ATP-dependent Clp protease proteolytic subunit 1 (196 aa).

The active-site Nucleophile is serine 101. Residue histidine 126 is part of the active site.

Belongs to the peptidase S14 family. In terms of assembly, component of the chloroplastic Clp protease core complex which consist of at least 16 proteins: CLPP4 (3 copies), CLPP5 (3 copies), CLPR4 (2 copies), ClpP1 (1 copy), CLPP6 (1 copy), CLPR2 (1 copy), CLPT1 (1 copy), CLPT2 (1 copy) and 3 copies of CLPP3 and/or CLPR1 and/or CLPR3. The core complex is organized in two heptameric rings, one containing CLPP3,4,5,6 in a 1:2:3:1 ratio and the other CLPP1 and CLPR1,2,3,4 in a 3:1:1:1:1 ratio. In terms of tissue distribution, mostly expressed in leaves. Also detected in stems, and to a lower extent, in roots (at protein level).

The protein localises to the plastid. The protein resides in the chloroplast stroma. The enzyme catalyses Hydrolysis of proteins to small peptides in the presence of ATP and magnesium. alpha-casein is the usual test substrate. In the absence of ATP, only oligopeptides shorter than five residues are hydrolyzed (such as succinyl-Leu-Tyr-|-NHMec, and Leu-Tyr-Leu-|-Tyr-Trp, in which cleavage of the -Tyr-|-Leu- and -Tyr-|-Trp bonds also occurs).. Its function is as follows. Cleaves peptides in various proteins in a process that requires ATP hydrolysis. Has a chymotrypsin-like activity. Plays a major role in the degradation of misfolded proteins. This is Chloroplastic ATP-dependent Clp protease proteolytic subunit 1 from Arabidopsis thaliana (Mouse-ear cress).